We begin with the raw amino-acid sequence, 327 residues long: Putative HTH-type transcriptional regulatory protein Mevan_1514 (327 aa).

In terms of domain architecture, HTH cro/C1-type spans 128–189; sequence LKETREKLNI…IKGINITDYF (62 aa). A DNA-binding region (H-T-H motif) is located at residues 139 to 158; it reads VGELAEFSRVSRKTIYKYEQ.

This is Putative HTH-type transcriptional regulatory protein Mevan_1514 from Methanococcus vannielii (strain ATCC 35089 / DSM 1224 / JCM 13029 / OCM 148 / SB).